A 140-amino-acid chain; its full sequence is Hemoglobin subunit alpha (140 aa).

The Globin domain occupies 1–140 (LSAADKGHVK…VSTVLTSKYR (140 aa)). Ser2 carries the post-translational modification Phosphoserine. Lys6 and Lys10 each carry N6-succinyllysine. Lys15 is subject to N6-acetyllysine; alternate. Lys15 is subject to N6-succinyllysine; alternate. A Phosphotyrosine modification is found at Tyr23. Ser34 bears the Phosphoserine mark. Lys39 is subject to N6-succinyllysine. Ser48 carries the post-translational modification Phosphoserine. Residue His57 coordinates O2. His86 is a heme b binding site. Ser101 carries the post-translational modification Phosphoserine. Thr107 is subject to Phosphothreonine. Phosphoserine is present on Ser123. Thr133 and Thr136 each carry phosphothreonine. Ser137 bears the Phosphoserine mark.

This sequence belongs to the globin family. As to quaternary structure, heterotetramer of two alpha chains and two beta chains. In terms of tissue distribution, red blood cells.

Functionally, involved in oxygen transport from the lung to the various peripheral tissues. Its function is as follows. Hemopressin acts as an antagonist peptide of the cannabinoid receptor CNR1. Hemopressin-binding efficiently blocks cannabinoid receptor CNR1 and subsequent signaling. This chain is Hemoglobin subunit alpha (HBA), found in Tragelaphus strepsiceros (Greater kudu).